The sequence spans 231 residues: Chromosome partition protein MukE (231 aa).

The disordered stretch occupies residues 197 to 231; that stretch reads RDGEAMPIEGGLSLDDSENDETSDNSAEGTGDEQP.

The protein belongs to the MukE family. In terms of assembly, interacts, and probably forms a ternary complex, with MukF and MukB. The complex formation is stimulated by calcium or magnesium.

Its subcellular location is the cytoplasm. It is found in the nucleoid. Functionally, involved in chromosome condensation, segregation and cell cycle progression. May participate in facilitating chromosome segregation by condensation DNA from both sides of a centrally located replisome during cell division. Probably acts via its interaction with MukB and MukF. The sequence is that of Chromosome partition protein MukE from Photorhabdus laumondii subsp. laumondii (strain DSM 15139 / CIP 105565 / TT01) (Photorhabdus luminescens subsp. laumondii).